Reading from the N-terminus, the 377-residue chain is Succinyl-diaminopimelate desuccinylase (377 aa).

H68 is a Zn(2+) binding site. D70 is an active-site residue. D101 provides a ligand contact to Zn(2+). E135 serves as the catalytic Proton acceptor. Positions 136, 164, and 350 each coordinate Zn(2+).

The protein belongs to the peptidase M20A family. DapE subfamily. In terms of assembly, homodimer. Zn(2+) is required as a cofactor. Requires Co(2+) as cofactor.

The enzyme catalyses N-succinyl-(2S,6S)-2,6-diaminopimelate + H2O = (2S,6S)-2,6-diaminopimelate + succinate. The protein operates within amino-acid biosynthesis; L-lysine biosynthesis via DAP pathway; LL-2,6-diaminopimelate from (S)-tetrahydrodipicolinate (succinylase route): step 3/3. Catalyzes the hydrolysis of N-succinyl-L,L-diaminopimelic acid (SDAP), forming succinate and LL-2,6-diaminopimelate (DAP), an intermediate involved in the bacterial biosynthesis of lysine and meso-diaminopimelic acid, an essential component of bacterial cell walls. The chain is Succinyl-diaminopimelate desuccinylase from Acinetobacter baumannii (strain AB307-0294).